Reading from the N-terminus, the 574-residue chain is Lipase maturation factor 1 (574 aa).

A disordered region spans residues 1-39 (MRPDSLVMAAPEGSLRKRKVGGAEHSPASQPSLARDPAD). Residues 1–49 (MRPDSLVMAAPEGSLRKRKVGGAEHSPASQPSLARDPADSPARLHTGTF) are Cytoplasmic-facing. Residues 50 to 72 (WLTRIVLLRALAFIYFVAFLVAF) form a helical membrane-spanning segment. Over 73–127 (NQNKALIGDRGLLPCKLYLKNVQEYFQGSTGWAAWTYAPTIMWLLDWSDMNFNLD) the chain is Lumenal. The chain crosses the membrane as a helical span at residues 128 to 151 (LIALLGLGISSFVLVTGCANMILM). At 152-207 (TALWALYMSLVNVGQIWYSFGWESQLLETGFLGIFLSPLWTLSRLPKNTPTSQIVL) the chain is on the cytoplasmic side. A helical transmembrane segment spans residues 208 to 221 (WGFRWLIFRIMLGA). Residues 222–292 (GLIKVRGDKC…LGRRMRILHG (71 aa)) lie on the Lumenal side of the membrane. The helical transmembrane segment at 293 to 321 (VLQILFQVILIISGNLSFLNWLTIVPSLA) threads the bilayer. The Cytoplasmic segment spans residues 322–367 (CFDDAALGFLFPSGPQGLKKQVLEIQREDTQRVQPKPRDRGCLVRQ). A helical membrane pass occupies residues 368-388 (VVNISLGILVAWLSVPVVINL). At 389 to 574 (LSSRQIMNTS…LPEPPSRHTR (186 aa)) the chain is on the lumenal side.

Belongs to the lipase maturation factor family. Interacts with LPL and SEL1L. As to expression, expressed in all tissues synthesizing lipoprotein lipase (Lpl) and hepatic lipase (Lipc), including adipose tissue, skeletal muscle, heart, and liver. Expressed at higher levels in tissues that express little or no lipase activity such as testis and pancreas suggesting additional functions in these tissues.

Its subcellular location is the endoplasmic reticulum membrane. Functionally, involved in the maturation of specific proteins in the endoplasmic reticulum. Required for maturation and transport of active lipoprotein lipase (LPL) through the secretory pathway. Each LMF1 molecule chaperones 50 or more molecules of LPL. This is Lipase maturation factor 1 (Lmf1) from Mus musculus (Mouse).